A 587-amino-acid chain; its full sequence is Aspartate--tRNA ligase (587 aa).

An L-aspartate-binding site is contributed by E174. Residues 198 to 201 (QITK) form an aspartate region. L-aspartate is bound at residue R220. Residues 220-222 (RDE) and Q229 contribute to the ATP site. H443 is an L-aspartate binding site. E477 is an ATP binding site. R484 contributes to the L-aspartate binding site. 529 to 532 (GLDR) provides a ligand contact to ATP.

This sequence belongs to the class-II aminoacyl-tRNA synthetase family. Type 1 subfamily. In terms of assembly, homodimer.

The protein resides in the cytoplasm. The enzyme catalyses tRNA(Asp) + L-aspartate + ATP = L-aspartyl-tRNA(Asp) + AMP + diphosphate. Catalyzes the attachment of L-aspartate to tRNA(Asp) in a two-step reaction: L-aspartate is first activated by ATP to form Asp-AMP and then transferred to the acceptor end of tRNA(Asp). The protein is Aspartate--tRNA ligase of Streptococcus pneumoniae (strain ATCC 700669 / Spain 23F-1).